A 143-amino-acid chain; its full sequence is Large ribosomal subunit protein uL16c (143 aa).

This sequence belongs to the universal ribosomal protein uL16 family. As to quaternary structure, part of the 50S ribosomal subunit.

Its subcellular location is the plastid. It is found in the chloroplast. This is Large ribosomal subunit protein uL16c from Chlorokybus atmophyticus (Soil alga).